Here is a 421-residue protein sequence, read N- to C-terminus: Nucleoprotein (421 aa).

Polar residues predominate over residues 1 to 11 (MSDNGPQSQRS). 2 disordered regions span residues 1 to 50 (MSDN…NNTA) and 63 to 82 (ELRF…GKDD). The RNA-binding stretch occupies residues 41 to 186 (RPQGLPNNTA…RGGSQSSSRS (146 aa)). Positions 48–175 (NTASWFTALT…TLPKGFYAEG (128 aa)) constitute a CoV N NTD domain. Arginine 92, arginine 107, and arginine 149 together coordinate RNA. Disordered regions lie at residues 168 to 212 (PKGF…RLAS), 233 to 271 (KVSG…YNVT), and 361 to 421 (KTFP…STQA). At serine 176 the chain carries Phosphoserine; by host. A compositionally biased stretch (low complexity) spans 179–212 (GSQSSSRSSSRSRGNSRNSTPGSSRGSSPARLAS). The segment covering 237–248 (KGQQQPGQTVTK) has biased composition (polar residues). One can recognise a CoV N CTD domain in the interval 247–364 (TKKSAAEASK…KHIDAYKTFP (118 aa)). The interval 258 to 361 (PRQKRTATKQ…LLNKHIDAYK (104 aa)) is dimerization. Residues 367–378 (EPKKDKKKKTDE) show a composition bias toward basic and acidic residues. Residues 405-421 (RQLQHSMSGASADSTQA) are compositionally biased toward polar residues.

It belongs to the betacoronavirus nucleocapsid protein family. Homooligomer. Both monomeric and oligomeric forms interact with RNA. Interacts with protein M. Interacts with NSP3; this interaction serves to tether the genome to the newly translated replicase-transcriptase complex at a very early stage of infection. Post-translationally, ADP-ribosylated. The ADP-ribosylation is retained in the virion during infection. Phosphorylated on serine and threonine residues.

It localises to the virion. It is found in the host endoplasmic reticulum-Golgi intermediate compartment. The protein resides in the host Golgi apparatus. In terms of biological role, packages the positive strand viral genome RNA into a helical ribonucleocapsid (RNP) and plays a fundamental role during virion assembly through its interactions with the viral genome and membrane protein M. Plays an important role in enhancing the efficiency of subgenomic viral RNA transcription as well as viral replication. This is Nucleoprotein from Rhinolophus sinicus (Chinese rufous horseshoe bat).